Reading from the N-terminus, the 119-residue chain is Large ribosomal subunit protein bL20 (119 aa).

The protein belongs to the bacterial ribosomal protein bL20 family.

Functionally, binds directly to 23S ribosomal RNA and is necessary for the in vitro assembly process of the 50S ribosomal subunit. It is not involved in the protein synthesizing functions of that subunit. The sequence is that of Large ribosomal subunit protein bL20 from Clostridium acetobutylicum (strain ATCC 824 / DSM 792 / JCM 1419 / IAM 19013 / LMG 5710 / NBRC 13948 / NRRL B-527 / VKM B-1787 / 2291 / W).